Reading from the N-terminus, the 356-residue chain is GTPase Obg (356 aa).

The region spanning 1-159 (MKFLDEAKVY…RWIWLRMKLI (159 aa)) is the Obg domain. Residues 160–327 (ADAGLVGLPN…ALRKLADVIS (168 aa)) enclose the OBG-type G domain. Residues 166-173 (GLPNAGKS), 191-195 (FTTLH), 212-215 (DIPG), 279-282 (NKID), and 308-310 (SGA) contribute to the GTP site. Positions 173 and 193 each coordinate Mg(2+). A disordered region spans residues 332 to 356 (SIKAKSTSDSAATEEPWAAPLPPQG).

It belongs to the TRAFAC class OBG-HflX-like GTPase superfamily. OBG GTPase family. In terms of assembly, monomer. Requires Mg(2+) as cofactor.

It localises to the cytoplasm. Functionally, an essential GTPase which binds GTP, GDP and possibly (p)ppGpp with moderate affinity, with high nucleotide exchange rates and a fairly low GTP hydrolysis rate. Plays a role in control of the cell cycle, stress response, ribosome biogenesis and in those bacteria that undergo differentiation, in morphogenesis control. The chain is GTPase Obg from Bradyrhizobium sp. (strain BTAi1 / ATCC BAA-1182).